The primary structure comprises 209 residues: 3-hexulose-6-phosphate synthase (209 aa).

It belongs to the HPS/KGPDC family. HPS subfamily. Homodimer.

It carries out the reaction D-ribulose 5-phosphate + formaldehyde = D-arabino-hex-3-ulose 6-phosphate. The protein operates within one-carbon metabolism; formaldehyde assimilation via RuMP pathway; D-fructose 6-phosphate from D-ribulose 5-phosphate and formaldehyde: step 1/2. Its function is as follows. Catalyzes the condensation of ribulose 5-phosphate with formaldehyde to form 3-hexulose 6-phosphate. The polypeptide is 3-hexulose-6-phosphate synthase (rmpA) (Methylomonas aminofaciens).